A 155-amino-acid chain; its full sequence is S-ribosylhomocysteine lyase (155 aa).

The Fe cation site is built by histidine 54, histidine 58, and cysteine 122.

The protein belongs to the LuxS family. As to quaternary structure, homodimer. The cofactor is Fe cation.

It carries out the reaction S-(5-deoxy-D-ribos-5-yl)-L-homocysteine = (S)-4,5-dihydroxypentane-2,3-dione + L-homocysteine. In terms of biological role, involved in the synthesis of autoinducer 2 (AI-2) which is secreted by bacteria and is used to communicate both the cell density and the metabolic potential of the environment. The regulation of gene expression in response to changes in cell density is called quorum sensing. Catalyzes the transformation of S-ribosylhomocysteine (RHC) to homocysteine (HC) and 4,5-dihydroxy-2,3-pentadione (DPD). The polypeptide is S-ribosylhomocysteine lyase (Deinococcus deserti (strain DSM 17065 / CIP 109153 / LMG 22923 / VCD115)).